We begin with the raw amino-acid sequence, 835 residues long: Protein bicaudal D homolog 1 (835 aa).

Positions 1–264 (MAAEEALKTV…YINLSDSHIS (264 aa)) form a coiled coil. The disordered stretch occupies residues 278-297 (EPNNDDKMNGHIHGPLGKLN). Residues 320 to 519 (ELNISEIQKL…TFSEELAQLY (200 aa)) are a coiled coil. 2 disordered regions span residues 545-616 (RSGS…LDTS) and 800-835 (DHEQSRRSKGKLGKSKIGSPKIVSSLLPPYRHSAHN). Residues 557–572 (GLLSPRLSRRGVSSPV) are compositionally biased toward low complexity. Residues 581-590 (VSKENTETSK) show a composition bias toward basic and acidic residues. The span at 591-604 (EPSPTKTPTISPVI) shows a compositional bias: low complexity. The stretch at 663–803 (IDKDKEALME…LEDLEFDHEQ (141 aa)) forms a coiled coil. Residues 663 to 803 (IDKDKEALME…LEDLEFDHEQ (141 aa)) are interaction with RAB6A.

It belongs to the BicD family. As to quaternary structure, interacts with RAB6A. Interacts (via C-terminus) with RAB6B (GTP-bound); the interaction is direct. Interacts with CLIP-115 and KIFC2. Expressed in the brain, heart and skeletal muscle.

It is found in the golgi apparatus. Functionally, regulates coat complex coatomer protein I (COPI)-independent Golgi-endoplasmic reticulum transport by recruiting the dynein-dynactin motor complex. This Mus musculus (Mouse) protein is Protein bicaudal D homolog 1 (Bicd1).